A 214-amino-acid polypeptide reads, in one-letter code: Soluble inorganic pyrophosphatase (214 aa).

The segment at 1 to 20 (MSEEDKTAASAEQPKRAPKL) is disordered. Substrate is bound by residues Lys64, Arg78, and Tyr90. Positions 100, 105, and 137 each coordinate Mg(2+). Tyr174 is a binding site for substrate.

This sequence belongs to the PPase family. Mg(2+) serves as cofactor.

The protein localises to the cytoplasm. It catalyses the reaction diphosphate + H2O = 2 phosphate + H(+). The sequence is that of Soluble inorganic pyrophosphatase (IPP) from Zea mays (Maize).